Consider the following 417-residue polypeptide: Serine hydroxymethyltransferase (417 aa).

(6S)-5,6,7,8-tetrahydrofolate-binding positions include leucine 112 and 116-118 (GHL). N6-(pyridoxal phosphate)lysine is present on lysine 221. Glutamate 247 is a binding site for (6S)-5,6,7,8-tetrahydrofolate.

This sequence belongs to the SHMT family. In terms of assembly, homodimer. It depends on pyridoxal 5'-phosphate as a cofactor.

The protein resides in the cytoplasm. The enzyme catalyses (6R)-5,10-methylene-5,6,7,8-tetrahydrofolate + glycine + H2O = (6S)-5,6,7,8-tetrahydrofolate + L-serine. Its pathway is one-carbon metabolism; tetrahydrofolate interconversion. It functions in the pathway amino-acid biosynthesis; glycine biosynthesis; glycine from L-serine: step 1/1. In terms of biological role, catalyzes the reversible interconversion of serine and glycine with tetrahydrofolate (THF) serving as the one-carbon carrier. This reaction serves as the major source of one-carbon groups required for the biosynthesis of purines, thymidylate, methionine, and other important biomolecules. Also exhibits THF-independent aldolase activity toward beta-hydroxyamino acids, producing glycine and aldehydes, via a retro-aldol mechanism. The sequence is that of Serine hydroxymethyltransferase from Borrelia garinii subsp. bavariensis (strain ATCC BAA-2496 / DSM 23469 / PBi) (Borreliella bavariensis).